The chain runs to 393 residues: Protein TsgA (393 aa).

12 consecutive transmembrane segments (helical) span residues 11–31, 51–71, 78–98, 101–121, 134–154, 162–182, 206–226, 245–265, 273–293, 298–318, 332–352, and 361–381; these read WISF…GMVM, FLNA…EIVP, FGFI…SLAL, AAMF…TFLI, LLFT…VAAF, WYWV…LTFG, IGVL…LGFI, ALVS…SFIL, ILTV…TGTQ, WFIL…ITLG, FILT…GPIV, and LLTA…LGFV.

It belongs to the major facilitator superfamily. TsgA family.

It localises to the cell inner membrane. This chain is Protein TsgA, found in Salmonella arizonae (strain ATCC BAA-731 / CDC346-86 / RSK2980).